We begin with the raw amino-acid sequence, 461 residues long: Photosystem II CP43 reaction center protein (461 aa).

Residues 1–2 (ME) constitute a propeptide that is removed on maturation. An N-acetylthreonine modification is found at T3. Position 3 is a phosphothreonine (T3). Transmembrane regions (helical) follow at residues 57–81 (LFEV…PHLA), 122–143 (LIGP…KDKN), 166–188 (KAMY…RVIT), 243–263 (KPFA…LSYS), and 279–300 (WFNN…ASQA). Position 355 (E355) interacts with [CaMn4O5] cluster. A helical membrane pass occupies residues 435-459 (RARAAAAGFEKGIERETEPALSMKP).

Belongs to the PsbB/PsbC family. PsbC subfamily. In terms of assembly, PSII is composed of 1 copy each of membrane proteins PsbA, PsbB, PsbC, PsbD, PsbE, PsbF, PsbH, PsbI, PsbJ, PsbK, PsbL, PsbM, PsbT, PsbX, PsbY, PsbZ, Psb30/Ycf12, at least 3 peripheral proteins of the oxygen-evolving complex and a large number of cofactors. It forms dimeric complexes. It depends on Binds multiple chlorophylls and provides some of the ligands for the Ca-4Mn-5O cluster of the oxygen-evolving complex. It may also provide a ligand for a Cl- that is required for oxygen evolution. PSII binds additional chlorophylls, carotenoids and specific lipids. as a cofactor.

The protein resides in the plastid. Its subcellular location is the chloroplast thylakoid membrane. One of the components of the core complex of photosystem II (PSII). It binds chlorophyll and helps catalyze the primary light-induced photochemical processes of PSII. PSII is a light-driven water:plastoquinone oxidoreductase, using light energy to abstract electrons from H(2)O, generating O(2) and a proton gradient subsequently used for ATP formation. The protein is Photosystem II CP43 reaction center protein of Chlorokybus atmophyticus (Soil alga).